Reading from the N-terminus, the 393-residue chain is Translation initiation factor eIF2B subunit beta (393 aa).

The segment at 105 to 125 (VSSSNSSSPSQKRDIPSNEKL) is disordered. Phosphoserine occurs at positions 106, 108, and 112.

It belongs to the eIF-2B alpha/beta/delta subunits family. As to quaternary structure, component of the translation initiation factor 2B (eIF2B) complex which is a heterodecamer of two sets of five different subunits: alpha, beta, gamma, delta and epsilon. Subunits alpha, beta and delta comprise a regulatory subcomplex and subunits epsilon and gamma comprise a catalytic subcomplex. Within the complex, the hexameric regulatory complex resides at the center, with the two heterodimeric catalytic subcomplexes bound on opposite sides.

Its subcellular location is the cytoplasm. The protein resides in the cytosol. Its function is as follows. Acts as a component of the translation initiation factor 2B (eIF2B) complex, which catalyzes the exchange of GDP for GTP on the eukaryotic initiation factor 2 (eIF2) complex gamma subunit. Its guanine nucleotide exchange factor activity is repressed when bound to eIF2 complex phosphorylated on the alpha subunit, thereby limiting the amount of methionyl-initiator methionine tRNA available to the ribosome and consequently global translation is repressed. The protein is Translation initiation factor eIF2B subunit beta (tif222) of Schizosaccharomyces pombe (strain 972 / ATCC 24843) (Fission yeast).